Here is a 642-residue protein sequence, read N- to C-terminus: Chaperone protein HtpG (642 aa).

The a; substrate-binding stretch occupies residues 1–350 (MATDTQKETL…SNDLSLNVSR (350 aa)). A b region spans residues 351 to 567 (EILQNDHAVD…EYDMGLQMRR (217 aa)). A c region spans residues 568–642 (LLEQAGQKLP…MNKLIVQLSK (75 aa)).

The protein belongs to the heat shock protein 90 family. As to quaternary structure, homodimer.

It localises to the cytoplasm. Molecular chaperone. Has ATPase activity. This Marinomonas sp. (strain MWYL1) protein is Chaperone protein HtpG.